The following is a 934-amino-acid chain: 2-oxoglutarate dehydrogenase E1 component (934 aa).

Positions 515–537 (RAAQDKIDKSDKMDNPDMERPES) are enriched in basic and acidic residues. Residues 515-544 (RAAQDKIDKSDKMDNPDMERPESLQEPLQS) form a disordered region.

It belongs to the alpha-ketoglutarate dehydrogenase family. In terms of assembly, homodimer. Part of the 2-oxoglutarate dehydrogenase (OGDH) complex composed of E1 (2-oxoglutarate dehydrogenase), E2 (dihydrolipoamide succinyltransferase) and E3 (dihydrolipoamide dehydrogenase); the complex contains multiple copies of the three enzymatic components (E1, E2 and E3). It depends on thiamine diphosphate as a cofactor.

The enzyme catalyses N(6)-[(R)-lipoyl]-L-lysyl-[protein] + 2-oxoglutarate + H(+) = N(6)-[(R)-S(8)-succinyldihydrolipoyl]-L-lysyl-[protein] + CO2. Functionally, E1 component of the 2-oxoglutarate dehydrogenase (OGDH) complex which catalyzes the decarboxylation of 2-oxoglutarate, the first step in the conversion of 2-oxoglutarate to succinyl-CoA and CO(2). The chain is 2-oxoglutarate dehydrogenase E1 component from Staphylococcus haemolyticus (strain JCSC1435).